The primary structure comprises 153 residues: MSTKIMLKSSDGKSFEIDEDVARKSIAINHMVEDGCATDVIPLRNVTSKILKIVIDYCEKHVKSKEEEDLKEWDADFMKTIETTILFDVMMAANYLNIQSLLDLTCKTVSDLLQADLLSGKTPDEIRAHFNIENDLTAEEVAKIREENQWAFQ.

Positions 90–153 are interaction with the F-box domain of F-box proteins; that stretch reads MMAANYLNIQ…IREENQWAFQ (64 aa).

The protein belongs to the SKP1 family. In terms of assembly, part of a SCF (SKP1-cullin-F-box) protein ligase complex. Interacts with PP2A13. As to expression, restricted to inflorescences, especially in the inflorescence meristem (IM).

It localises to the nucleus. It participates in protein modification; protein ubiquitination. Its function is as follows. Involved in ubiquitination and subsequent proteasomal degradation of target proteins. Together with CUL1, RBX1 and a F-box protein, it forms a SCF E3 ubiquitin ligase complex. The functional specificity of this complex depends on the type of F-box protein. In the SCF complex, it serves as an adapter that links the F-box protein to CUL1. This Arabidopsis thaliana (Mouse-ear cress) protein is SKP1-like protein 5 (ASK5).